Here is a 467-residue protein sequence, read N- to C-terminus: Probable apyrase 2 (467 aa).

Residues 1 to 25 (MRRYSALPGGGARPDTLADRLHRYR) lie on the Cytoplasmic side of the membrane. A helical; Signal-anchor for type II membrane protein membrane pass occupies residues 26–46 (GVLLVILAPLALVSLVLLLMP). Topologically, residues 47–467 (RSPASSSAAA…PLGSAIEVAS (421 aa)) are extracellular. Residue 70 to 80 (VIFDAGSSGSR) coordinates ATP. E192 acts as the Proton acceptor in catalysis. Residue 216–226 (GVVDLGGGSVQ) coordinates ATP.

Belongs to the GDA1/CD39 NTPase family. Ca(2+) serves as cofactor.

It is found in the membrane. The catalysed reaction is a ribonucleoside 5'-triphosphate + 2 H2O = a ribonucleoside 5'-phosphate + 2 phosphate + 2 H(+). Its function is as follows. Catalyzes the hydrolysis of phosphoanhydride bonds of nucleoside tri- and di-phosphates. The chain is Probable apyrase 2 (APY2) from Oryza sativa subsp. japonica (Rice).